The primary structure comprises 178 residues: MSTPPLAASGMAPGPFAGPQAQQAAREVNTASLCRIGQETVQDIVYRTMEIFQLLRNMQLPNGVTYHTGTYQDRLTKLQDNLRQLSVLFRKLRLVYDKCNENCGGMDPIPVEQLIPYVEEDGSKNDDRAGPPRFASEERREIAEVNKKLKQKNQQLKQIMDQLRNLIWDINAMLAMRN.

Positions 1-22 (MSTPPLAASGMAPGPFAGPQAQ) are disordered. N-acetylserine is present on Ser2. Residues 10 to 22 (GMAPGPFAGPQAQ) show a composition bias toward low complexity. Coiled-coil stretches lie at residues 70 to 94 (TYQD…KLRL) and 133 to 173 (RFAS…INAM).

It belongs to the Mediator complex subunit 30 family. In terms of assembly, component of the Mediator complex, which is composed of MED1, MED4, MED6, MED7, MED8, MED9, MED10, MED11, MED12, MED13, MED13L, MED14, MED15, MED16, MED17, MED18, MED19, MED20, MED21, MED22, MED23, MED24, MED25, MED26, MED27, MED29, MED30, MED31, CCNC, CDK8 and CDC2L6/CDK11. The MED12, MED13, CCNC and CDK8 subunits form a distinct module termed the CDK8 module. Mediator containing the CDK8 module is less active than Mediator lacking this module in supporting transcriptional activation. Individual preparations of the Mediator complex lacking one or more distinct subunits have been variously termed ARC, CRSP, DRIP, PC2, SMCC and TRAP. In terms of tissue distribution, expressed in brain, heart, kidney, liver, lung, pancreas, placenta and skeletal muscle.

Its subcellular location is the nucleus. Functionally, component of the Mediator complex, a coactivator involved in the regulated transcription of nearly all RNA polymerase II-dependent genes. Mediator functions as a bridge to convey information from gene-specific regulatory proteins to the basal RNA polymerase II transcription machinery. Mediator is recruited to promoters by direct interactions with regulatory proteins and serves as a scaffold for the assembly of a functional preinitiation complex with RNA polymerase II and the general transcription factors. This Homo sapiens (Human) protein is Mediator of RNA polymerase II transcription subunit 30 (MED30).